The primary structure comprises 465 residues: Protein hedgehog (465 aa).

A lipid anchor (N-palmitoyl cysteine) is attached at Cys79. Glu143, Glu144, Asp149, Thr179, Glu180, Asp183, and Asp185 together coordinate Ca(2+). Gly251 carries the Cholesterol glycine ester lipid modification.

This sequence belongs to the hedgehog family. As to quaternary structure, interacts with shf. The C-terminal part of the hedgehog protein precursor displays an autoproteolysis activity that results in the cleavage of the full-length protein into two parts (N-product and C-product). In addition, the C-terminal part displays a cholesterol transferase activity that results by the covalent attachment of a cholesterol moiety to the C-terminal of the newly generated N-product. The N-product is the active species in both local and long-range signaling, whereas the C-product has no signaling activity. Post-translationally, cholesterylation is required for N-product targeting to lipid rafts and multimerization. In terms of processing, N-palmitoylation by Rasp of the hedgehog N-product, within the secretory pathway, is required for the embryonic and larval patterning activities of the hedgehog signal.

Its subcellular location is the nucleus. The protein localises to the cytoplasm. It localises to the cell membrane. It catalyses the reaction glycyl-L-cysteinyl-[protein] + cholesterol + H(+) = [protein]-C-terminal glycyl cholesterol ester + N-terminal L-cysteinyl-[protein]. Its function is as follows. The C-terminal part of the hedgehog protein precursor displays an autoproteolysis activity that results in the cleavage of the full-length protein into two parts (N-product and C-product). In addition, the C-terminal part displays a cholesterol transferase activity that results by the covalent attachment of a cholesterol moiety to the C-terminal of the newly generated N-product. Once cleaved, the C-product has no signaling activity and diffuses from the cell. Functionally, the dually lipidated hedgehog protein N-product is a morphogen which is essential for a variety of patterning events during development. Establishes the anterior-posterior axis of the embryonic segments and patterns the larval imaginal disks. Binds to the patched (ptc) receptor, which functions in association with smoothened (smo), to activate the transcription of target genes wingless (wg), decapentaplegic (dpp) and ptc. In the absence of hh, ptc represses the constitutive signaling activity of smo through fused (fu). Essential component of a signaling pathway which regulates the Duox-dependent gut immune response to bacterial uracil; required to activate Cad99C-dependent endosome formation, norpA-dependent Ca2+ mobilization and p38 MAPK, which are essential steps in the Duox-dependent production of reactive oxygen species (ROS) in response to intestinal bacterial infection. During photoreceptor differentiation, it up-regulates transcription of Ubr3, which in turn promotes the hh-signaling pathway by mediating the ubiquitination and degradation of cos. The polypeptide is Protein hedgehog (Drosophila erecta (Fruit fly)).